Reading from the N-terminus, the 97-residue chain is Large ribosomal subunit protein bL27 (97 aa).

Residues 1–12 (MLKMNLANLQLF) constitute a propeptide that is removed on maturation. The interval 14–37 (HKKGGGSTSNGRDSQAKRLGAKAA) is disordered.

This sequence belongs to the bacterial ribosomal protein bL27 family. The N-terminus is cleaved by ribosomal processing cysteine protease Prp.

The polypeptide is Large ribosomal subunit protein bL27 (Streptococcus uberis (strain ATCC BAA-854 / 0140J)).